The primary structure comprises 184 residues: MGLLTILKKMKQKERELRLLMLGLDNAGKTTILKKFNGEDIDTISPTLGFNIKTLEHRGFKLNIWDVGGQKSLRSYWRNYFESTDGLIWVVDSADRQRMQDCQRELQNLLVEERLAGATLLIFANKQDLPGALSSNAIREALELDSIRSHHWCIQGCSAVTGENLLPGIDWLLDDISSRIFMAD.

Gly2 is lipidated: N-myristoyl glycine. GTP is bound at residue 23 to 30; sequence GLDNAGKT. At Ser45 the chain carries Phosphoserine. Residues 66–70 and Gly68 each bind GTP; that span reads DVGGQ. Lys71 is covalently cross-linked (Glycyl lysine isopeptide (Lys-Gly) (interchain with G-Cter in ubiquitin)). 125 to 128 lines the GTP pocket; it reads NKQD.

The protein belongs to the small GTPase superfamily. Arf family. As to quaternary structure, interacts with ELMOD2. Interacts with ARL2BP; the GTP-bound form interacts with ARL2BP. The GDP-bound form interacts preferentially with TBCD. Interacts with UNC119. Found in a complex with ARL2, ARL2BP and SLC25A4. The GTP-bound form interacts with PDE6D. Found in a complex with ARL2, ARL2BP and SLC25A6. Found in a complex with at least ARL2, PPP2CB, PPP2R1A, PPP2R2A, PPP2R5E and TBCD. Post-translationally, not N-myristoylated. Expressed in liver and retina (at protein level).

Its subcellular location is the nucleus. It localises to the mitochondrion intermembrane space. The protein resides in the cytoplasm. It is found in the cytoskeleton. The protein localises to the microtubule organizing center. Its subcellular location is the centrosome. It localises to the mitochondrion. Small GTP-binding protein which cycles between an inactive GDP-bound and an active GTP-bound form, and the rate of cycling is regulated by guanine nucleotide exchange factors (GEF) and GTPase-activating proteins (GAP). GTP-binding protein that does not act as an allosteric activator of the cholera toxin catalytic subunit. Regulates formation of new microtubules and centrosome integrity. Prevents the TBCD-induced microtubule destruction. Participates in association with TBCD, in the disassembly of the apical junction complexes. Antagonizes the effect of TBCD on epithelial cell detachment and tight and adherens junctions disassembly. Together with ARL2, plays a role in the nuclear translocation, retention and transcriptional activity of STAT3. Component of a regulated secretory pathway involved in Ca(2+)-dependent release of acetylcholine. Required for normal progress through the cell cycle. The protein is ADP-ribosylation factor-like protein 2 (ARL2) of Bos taurus (Bovine).